The primary structure comprises 1252 residues: Immunoglobulin superfamily DCC subclass member 4 (1252 aa).

Positions 1–22 (MARADTGRGLLVLTFCLLSARG) are cleaved as a signal peptide. Residues 23-956 (ELPLPQETTV…SDSLDVHAVT (934 aa)) lie on the Extracellular side of the membrane. Ig-like domains lie at 27-136 (PQET…VAVV), 142-228 (EDFS…ASLT), 241-329 (QDVV…AELR), and 334-420 (PAIS…APLA). Disulfide bonds link Cys-55-Cys-120 and Cys-163-Cys-211. Asn-88 carries N-linked (GlcNAc...) asparagine glycosylation. Residue Asn-251 is glycosylated (N-linked (GlcNAc...) asparagine). 2 disulfide bridges follow: Cys-264–Cys-311 and Cys-355–Cys-404. Fibronectin type-III domains are found at residues 430–524 (APTR…TLDD), 526–622 (PSAA…TPGV), 631–742 (APAE…TPDL), 751–844 (PPAH…TLPD), and 849–944 (PPSD…TLQK). Residues 669–688 (TEEEADGDRPPGGRGDQAWD) are disordered. The helical transmembrane segment at 957–977 (GIIVGVCLGLLCLLACMCAGL) threads the bilayer. The Cytoplasmic portion of the chain corresponds to 978-1252 (RRSSHREALP…RAPVSSAQVP (275 aa)). Position 994 is a phosphothreonine (Thr-994).

It belongs to the immunoglobulin superfamily. DCC family. In terms of tissue distribution, expressed in skeletal muscle, heart and brain. Brain expression is hippocampus-specific.

The protein resides in the cell membrane. This Mus musculus (Mouse) protein is Immunoglobulin superfamily DCC subclass member 4 (Igdcc4).